Reading from the N-terminus, the 734-residue chain is Photosystem I P700 chlorophyll a apoprotein A2 (734 aa).

8 helical membrane-spanning segments follow: residues 46–69 (IFASHFGHLAIIFLWTSGNLFHVA), 135–158 (LYFGALGLLVLSTTLLFAGWLHLQ), 175–199 (LNHHLSGLFGVSSLAWSGHLIHVAI), 273–291 (IAHHHLAIAVVFIFAGHMY), 330–353 (LHMQLGLALASLGVATSLVAQHMY), 369–395 (AALYTHHQYIAGFLMVGAFAHGAIFFV), 417–439 (AIISHLSWVSLFLGFHTLGLYIH), and 517–535 (FLVHHAIALGLHTTTLILV). Residues Cys-559 and Cys-568 each coordinate [4Fe-4S] cluster. Transmembrane regions (helical) follow at residues 575–596 (AFYLAMFWMLNTISWVTFYWHW) and 643–665 (QAVWAWMFLFGHLIWATGFMFLI). Chlorophyll a contacts are provided by His-654, Met-662, and Tyr-670. Trp-671 is a phylloquinone binding site. The helical transmembrane segment at 707 to 727 (LVGLAHFTVGFIFTFAPFVIA) threads the bilayer.

This sequence belongs to the PsaA/PsaB family. In terms of assembly, the PsaA/B heterodimer binds the P700 chlorophyll special pair and subsequent electron acceptors. PSI consists of a core antenna complex that captures photons, and an electron transfer chain that converts photonic excitation into a charge separation. The eukaryotic PSI reaction center is composed of at least 11 subunits. The cofactor is P700 is a chlorophyll a/chlorophyll a' dimer, A0 is one or more chlorophyll a, A1 is one or both phylloquinones and FX is a shared 4Fe-4S iron-sulfur center..

It is found in the plastid. It localises to the chloroplast thylakoid membrane. The catalysed reaction is reduced [plastocyanin] + hnu + oxidized [2Fe-2S]-[ferredoxin] = oxidized [plastocyanin] + reduced [2Fe-2S]-[ferredoxin]. PsaA and PsaB bind P700, the primary electron donor of photosystem I (PSI), as well as the electron acceptors A0, A1 and FX. PSI is a plastocyanin/cytochrome c6-ferredoxin oxidoreductase, converting photonic excitation into a charge separation, which transfers an electron from the donor P700 chlorophyll pair to the spectroscopically characterized acceptors A0, A1, FX, FA and FB in turn. Oxidized P700 is reduced on the lumenal side of the thylakoid membrane by plastocyanin or cytochrome c6. This Emiliania huxleyi (Coccolithophore) protein is Photosystem I P700 chlorophyll a apoprotein A2.